The sequence spans 431 residues: MFRSKRSGLVRRLWRSRVIPERDGGDGNGQSSERNATAVTAEGQRMAQPRRAQEGEGRPVRCCLFAERPGPELPPPPPPPPPGGASPPGPGGGEARSRLVLLERELKAVTYALLKRLKERSLHSLLQAVESRGGTPGGCVLVARGELRLGAARRPPPHLLLGKLFRWPDLQHPAELKALCECQSFGAADGPTVCCNPYHFSRLCGPESPPPPYSRLSPNDEQKPLDLSDSTLSYTETEATNSPNVTPGEFSDASTSPDAVKRSHWCNVAYWEHRTRVGRLYTVYEQSVSIFYDLPQGNGFCLGQLNLENRSETVRRTRSKIGYGILLSKEPDGVWAYNRSEHPIFVNSPTLDIPNCRTLIVRKVMPGYSIKVFDYEKSCLLQHTAELDYADGPYDPNSVRISFAKGWGPCYSRQFITSCPCWLEILLSNNR.

Residues 1–15 (MFRSKRSGLVRRLWR) are compositionally biased toward basic residues. The disordered stretch occupies residues 1 to 95 (MFRSKRSGLV…SPPGPGGGEA (95 aa)). Residues 29–38 (GQSSERNATA) are compositionally biased toward polar residues. Over residues 71 to 90 (PELPPPPPPPPPGGASPPGP) the composition is skewed to pro residues. The 125-residue stretch at 85-209 (ASPPGPGGGE…FSRLCGPESP (125 aa)) folds into the MH1 domain. Zn(2+) contacts are provided by C139, C182, C194, and H199. Residues 235 to 245 (TETEATNSPNV) show a composition bias toward polar residues. The segment at 235 to 258 (TETEATNSPNVTPGEFSDASTSPD) is disordered. Residues 265 to 431 (WCNVAYWEHR…WLEILLSNNR (167 aa)) form the MH2 domain.

The protein belongs to the dwarfin/SMAD family. Developing heart, eyes and limbs.

Its subcellular location is the nucleus. In terms of biological role, transforming growth factor-beta superfamily receptors signaling occurs through the Smad family of intracellular mediators. SMAD6 is an inhibitory Smad (i-Smad) that negatively regulates signaling downstream of type I transforming growth factor-beta. Acts as a mediator of TGF-beta and BMP anti-inflammatory activities. Suppresses IL1R-TLR signaling through its direct interaction with PEL1, preventing NF-kappa-B activation, nuclear transport and NF-kappa-B-mediated expression of pro-inflammatory genes. Blocks the BMP-SMAD1 signaling pathway by competing with SMAD4 for receptor-activated SMAD1-binding. Binds to regulatory elements in target promoter regions. This Gallus gallus (Chicken) protein is Mothers against decapentaplegic homolog 6 (SMAD6).